Reading from the N-terminus, the 186-residue chain is TATA box-binding protein-like 1 (186 aa).

It belongs to the TBP family.

The protein localises to the cytoplasm. It is found in the nucleus. Functionally, part of a specialized transcription system that mediates the transcription of most ribosomal proteins through the 5'-TCT-3' motif which is a core promoter element at these genes. Seems to also mediate the transcription of NF1. Does not bind the TATA box. Members of the TBP family are differentially required to regulate transcription and development during early embryogenesis. The sequence is that of TATA box-binding protein-like 1 from Danio rerio (Zebrafish).